Reading from the N-terminus, the 292-residue chain is Ribonuclease HIII (292 aa).

Positions 76 to 292 constitute an RNase H type-2 domain; sequence TNLIGTDEVG…TQKAIKIAQL (217 aa). Asp82, Glu83, and Asp186 together coordinate a divalent metal cation.

It belongs to the RNase HII family. RnhC subfamily. The cofactor is Mn(2+). Requires Mg(2+) as cofactor.

It is found in the cytoplasm. The enzyme catalyses Endonucleolytic cleavage to 5'-phosphomonoester.. Functionally, endonuclease that specifically degrades the RNA of RNA-DNA hybrids. In Lactococcus lactis subsp. lactis (strain IL1403) (Streptococcus lactis), this protein is Ribonuclease HIII.